The chain runs to 277 residues: Putative glucose-6-phosphate/phosphate-translocator-like protein 1 (277 aa).

Transmembrane regions (helical) follow at residues Val8–Leu28, Leu46–Val66, Met124–Phe143, Val153–Phe173, and Pro230–Ser250.

Belongs to the TPT transporter family. GPT (TC 2.A.7.9) subfamily.

The protein resides in the membrane. This is Putative glucose-6-phosphate/phosphate-translocator-like protein 1 from Arabidopsis thaliana (Mouse-ear cress).